A 360-amino-acid polypeptide reads, in one-letter code: Peptide chain release factor 1 (360 aa).

Glutamine 235 carries the post-translational modification N5-methylglutamine. Residues 285–295 (RQAAEQADTRR) show a composition bias toward basic and acidic residues. The segment at 285-309 (RQAAEQADTRRNLLGSGDRSDKIRT) is disordered.

Belongs to the prokaryotic/mitochondrial release factor family. Post-translationally, methylated by PrmC. Methylation increases the termination efficiency of RF1.

It is found in the cytoplasm. Its function is as follows. Peptide chain release factor 1 directs the termination of translation in response to the peptide chain termination codons UAG and UAA. The protein is Peptide chain release factor 1 of Actinobacillus pleuropneumoniae serotype 7 (strain AP76).